We begin with the raw amino-acid sequence, 451 residues long: Phosphoglucosamine mutase (451 aa).

Ser-101 (phosphoserine intermediate) is an active-site residue. Ser-101, Asp-241, Asp-243, and Asp-245 together coordinate Mg(2+). Ser-101 is modified (phosphoserine).

It belongs to the phosphohexose mutase family. The cofactor is Mg(2+). Post-translationally, activated by phosphorylation.

It carries out the reaction alpha-D-glucosamine 1-phosphate = D-glucosamine 6-phosphate. Catalyzes the conversion of glucosamine-6-phosphate to glucosamine-1-phosphate. The sequence is that of Phosphoglucosamine mutase from Exiguobacterium sibiricum (strain DSM 17290 / CCUG 55495 / CIP 109462 / JCM 13490 / 255-15).